Reading from the N-terminus, the 485-residue chain is MFS-type transporter phm3 (485 aa).

The interval 1 to 22 is disordered; sequence MSLQDPTKEHNNTSPSPKDEKT. 12 helical membrane passes run 55–75, 83–103, 113–133, 144–164, 175–195, 203–223, 278–298, 317–337, 357–377, 384–404, 421–441, and 449–469; these read FTLY…LLVA, IVAS…PFLL, LWLY…CALS, FICG…IADL, ALFG…GGFV, WTFY…AVIM, PIVL…YLLF, GLAF…FAIL, LVLM…YGWS, WIVP…ILMP, ALAV…LAGP, and LGWG…VPFV.

Belongs to the major facilitator superfamily.

The protein localises to the cell membrane. In terms of biological role, MFS-type transporter; part of the gene cluster that mediates the biosynthesis of the trans-fused decalin-containing tetramic acid phomasetin. This chain is MFS-type transporter phm3, found in Pyrenochaetopsis sp.